Consider the following 129-residue polypeptide: Transcriptional activator protein (129 aa).

A Nuclear localization signal motif is present at residues 13-28; that stretch reads KAQHRAAKRRAIRRRR. The segment at 33–50 is a zinc-finger region; that stretch reads CGCSIYIHIDCRNNGFTH. Positions 73 to 118 are disordered; that stretch reads LFQDNQRRGSPLHQHQDIPLTNQVQPQPEESIGSPQGISQLPSMDD. Residues 91–114 show a composition bias toward polar residues; sequence PLTNQVQPQPEESIGSPQGISQLP. The transactivation stretch occupies residues 115-129; that stretch reads SMDDIDDSFWENLFK.

It belongs to the geminiviridae transcriptional activator protein family. As to quaternary structure, monomer. Homodimer. Homooligomer. Self-interaction correlates with nuclear localization and efficient activation of transcription. Monomers suppress local silencing by interacting with and inactivating host adenosine kinase (ADK) in the cytoplasm. Interacts with and inhibits host SNF1 kinase. Binds to ssDNA. Post-translationally, phosphorylated.

The protein resides in the host nucleus. The protein localises to the host cytoplasm. In terms of biological role, strong activator of the late viral genes promoters. Enhances the expression of the capsid protein and nuclear shuttle protein. Acts as a suppressor of RNA-mediated gene silencing, also known as post-transcriptional gene silencing (PTGS), a mechanism of plant viral defense that limits the accumulation of viral RNAs. Suppresses the host RNA silencing by inhibiting adenosine kinase (ADK), a kinase involved in a general methylation pathway. Also suppresses the host basal defense by interacting with and inhibiting SNF1 kinase, a key regulator of cell metabolism implicated in innate antiviral defense. Determines pathogenicity. The chain is Transcriptional activator protein from Tomato golden mosaic virus (strain Yellow vein) (TGMV).